Consider the following 185-residue polypeptide: Ribosome-recycling factor (185 aa).

It belongs to the RRF family.

It is found in the cytoplasm. Responsible for the release of ribosomes from messenger RNA at the termination of protein biosynthesis. May increase the efficiency of translation by recycling ribosomes from one round of translation to another. This is Ribosome-recycling factor from Thermosipho africanus (strain TCF52B).